The sequence spans 366 residues: Outer membrane protein IIIA (366 aa).

The N-terminal stretch at 1–22 is a signal peptide; sequence MNIRMVLLASAAAFAASTPVLA.

It belongs to the alphaproteobacteria porin family. As to quaternary structure, forms calcium-stabilized oligomers. Attached covalently to peptidoglycan.

It is found in the cell outer membrane. Functionally, may act as an outer membrane pore. This chain is Outer membrane protein IIIA (ropA), found in Rhizobium leguminosarum bv. viciae.